The following is a 305-amino-acid chain: tRNA-cytidine(32) 2-sulfurtransferase (305 aa).

Residues Met-1–Arg-20 form a disordered region. The PP-loop motif motif lies at Ser-59–Ser-64. Residues Cys-134, Cys-137, and Cys-225 each contribute to the [4Fe-4S] cluster site. The disordered stretch occupies residues Asp-282–Asp-305.

Belongs to the TtcA family. As to quaternary structure, homodimer. Requires Mg(2+) as cofactor. The cofactor is [4Fe-4S] cluster.

The protein localises to the cytoplasm. The enzyme catalyses cytidine(32) in tRNA + S-sulfanyl-L-cysteinyl-[cysteine desulfurase] + AH2 + ATP = 2-thiocytidine(32) in tRNA + L-cysteinyl-[cysteine desulfurase] + A + AMP + diphosphate + H(+). The protein operates within tRNA modification. In terms of biological role, catalyzes the ATP-dependent 2-thiolation of cytidine in position 32 of tRNA, to form 2-thiocytidine (s(2)C32). The sulfur atoms are provided by the cysteine/cysteine desulfurase (IscS) system. The polypeptide is tRNA-cytidine(32) 2-sulfurtransferase (Xanthomonas axonopodis pv. citri (strain 306)).